A 1186-amino-acid polypeptide reads, in one-letter code: Major DNA-binding protein (1186 aa).

A zinc finger lies at 495–508 (CCLCSLDNRHSCAH). The Required for filament formation motif lies at 839–840 (FW). Residues 1160 to 1186 (RRRPLACSDLFGDAPAEKRNDLTLDML) form a required for nuclear localization region.

Belongs to the herpesviridae major DNA-binding protein family. Homooligomers. Forms double-helical filaments necessary for the formation of replication compartments within the host nucleus. Interacts with the origin-binding protein. Interacts with the helicase primase complex; this interaction stimulates primer synthesis activity of the helicase-primase complex. Interacts with the DNA polymerase. Interacts with the alkaline exonuclease; this interaction increases its nuclease processivity.

It is found in the host nucleus. Its function is as follows. Plays several crucial roles in viral infection. Participates in the opening of the viral DNA origin to initiate replication by interacting with the origin-binding protein. May disrupt loops, hairpins and other secondary structures present on ssDNA to reduce and eliminate pausing of viral DNA polymerase at specific sites during elongation. Promotes viral DNA recombination by performing strand-transfer, characterized by the ability to transfer a DNA strand from a linear duplex to a complementary single-stranded DNA circle. Can also catalyze the renaturation of complementary single strands. Additionally, reorganizes the host cell nucleus, leading to the formation of prereplicative sites and replication compartments. This process is driven by the protein which can form double-helical filaments in the absence of DNA. The protein is Major DNA-binding protein of Bovine herpesvirus 2 (strain BMV) (BoHV-2).